Reading from the N-terminus, the 413-residue chain is Alpha-1-antitrypsin 1-5 (413 aa).

The signal sequence occupies residues 1–24 (MTPSISWCLLLLAGLCCLVPSFLA). Asn64, Asn101, and Asn265 each carry an N-linked (GlcNAc...) asparagine glycan. Residues 368-387 (AATVLQGGFLSMPPILHFNR) form an RCL region.

It belongs to the serpin family.

The protein resides in the secreted. Its function is as follows. Does not inhibit elastase or chymotrypsin. No target protease has been identified to date. This is Alpha-1-antitrypsin 1-5 (Serpina1e) from Mus musculus (Mouse).